Here is an 809-residue protein sequence, read N- to C-terminus: Glycerol-3-phosphate acyltransferase (809 aa).

The HXXXXD motif motif lies at 306-311 (HRSHMD).

Belongs to the GPAT/DAPAT family.

Its subcellular location is the cell inner membrane. The enzyme catalyses sn-glycerol 3-phosphate + an acyl-CoA = a 1-acyl-sn-glycero-3-phosphate + CoA. Its pathway is phospholipid metabolism; CDP-diacylglycerol biosynthesis; CDP-diacylglycerol from sn-glycerol 3-phosphate: step 1/3. In Vibrio vulnificus (strain CMCP6), this protein is Glycerol-3-phosphate acyltransferase.